We begin with the raw amino-acid sequence, 343 residues long: N-acetyl-gamma-glutamyl-phosphate reductase (343 aa).

Cysteine 147 is an active-site residue.

The protein belongs to the NAGSA dehydrogenase family. Type 1 subfamily.

It is found in the cytoplasm. It catalyses the reaction N-acetyl-L-glutamate 5-semialdehyde + phosphate + NADP(+) = N-acetyl-L-glutamyl 5-phosphate + NADPH + H(+). It functions in the pathway amino-acid biosynthesis; L-arginine biosynthesis; N(2)-acetyl-L-ornithine from L-glutamate: step 3/4. Its function is as follows. Catalyzes the NADPH-dependent reduction of N-acetyl-5-glutamyl phosphate to yield N-acetyl-L-glutamate 5-semialdehyde. The chain is N-acetyl-gamma-glutamyl-phosphate reductase from Listeria innocua serovar 6a (strain ATCC BAA-680 / CLIP 11262).